The chain runs to 378 residues: tRNA (guanine(26)-N(2))-dimethyltransferase (378 aa).

The Trm1 methyltransferase domain maps to 4 to 374; the sequence is KEVTEGKVRI…KGYEEIIRCV (371 aa). S-adenosyl-L-methionine is bound by residues Arg-44, Arg-69, Asp-87, Asp-114, and Ala-115. Residues Cys-246, Cys-249, Cys-263, and Cys-266 each coordinate Zn(2+).

It belongs to the class I-like SAM-binding methyltransferase superfamily. Trm1 family.

It catalyses the reaction guanosine(26) in tRNA + 2 S-adenosyl-L-methionine = N(2)-dimethylguanosine(26) in tRNA + 2 S-adenosyl-L-homocysteine + 2 H(+). In terms of biological role, dimethylates a single guanine residue at position 26 of a number of tRNAs using S-adenosyl-L-methionine as donor of the methyl groups. The protein is tRNA (guanine(26)-N(2))-dimethyltransferase of Saccharolobus islandicus (strain M.14.25 / Kamchatka #1) (Sulfolobus islandicus).